The following is a 116-amino-acid chain: Protein Rev (116 aa).

Serine 8 is subject to Phosphoserine; by host CK2. The tract at residues isoleucine 18–asparagine 26 is homomultimerization. Disordered stretches follow at residues serine 25–glutamine 49 and serine 82–glutamate 116. Residues threonine 34 to arginine 50 carry the Nuclear localization signal and RNA-binding (RRE) motif. Basic residues predominate over residues glutamine 36–glutamine 49. The Nuclear export signal and binding to XPO1 motif lies at leucine 73–asparagine 84. Position 99 is a phosphoserine; by host (serine 99).

It belongs to the HIV-1 REV protein family. Homomultimer; when bound to the RRE. Multimeric assembly is essential for activity and may involve XPO1. Binds to human KPNB1, XPO1, TNPO1, RANBP5 and IPO7. Interacts with the viral Integrase. Interacts with human KHDRBS1. Interacts with human NAP1; this interaction decreases Rev multimerization and stimulates its activity. Interacts with human DEAD-box helicases DDX3 and DDX24; these interactions may serve for viral RNA export to the cytoplasm and packaging, respectively. Interacts with human PSIP1; this interaction may inhibit HIV-1 DNA integration by promoting dissociation of the Integrase-LEDGF/p75 complex. In terms of processing, asymmetrically arginine dimethylated at one site by host PRMT6. Methylation impairs the RNA-binding activity and export of viral RNA from the nucleus to the cytoplasm. Phosphorylated by protein kinase CK2. Presence of, and maybe binding to the N-terminus of the regulatory beta subunit of CK2 is necessary for CK2-mediated Rev's phosphorylation.

The protein localises to the host nucleus. It is found in the host nucleolus. It localises to the host cytoplasm. Functionally, escorts unspliced or incompletely spliced viral pre-mRNAs (late transcripts) out of the nucleus of infected cells. These pre-mRNAs carry a recognition sequence called Rev responsive element (RRE) located in the env gene, that is not present in fully spliced viral mRNAs (early transcripts). This function is essential since most viral proteins are translated from unspliced or partially spliced pre-mRNAs which cannot exit the nucleus by the pathway used by fully processed cellular mRNAs. Rev itself is translated from a fully spliced mRNA that readily exits the nucleus. Rev's nuclear localization signal (NLS) binds directly to KPNB1/Importin beta-1 without previous binding to KPNA1/Importin alpha-1. KPNB1 binds to the GDP bound form of RAN (Ran-GDP) and targets Rev to the nucleus. In the nucleus, the conversion from Ran-GDP to Ran-GTP dissociates Rev from KPNB1 and allows Rev's binding to the RRE in viral pre-mRNAs. Rev multimerization on the RRE via cooperative assembly exposes its nuclear export signal (NES) to the surface. Rev can then form a complex with XPO1/CRM1 and Ran-GTP, leading to nuclear export of the complex. Conversion from Ran-GTP to Ran-GDP mediates dissociation of the Rev/RRE/XPO1/RAN complex, so that Rev can return to the nucleus for a subsequent round of export. Beside KPNB1, also seems to interact with TNPO1/Transportin-1, RANBP5/IPO5 and IPO7/RANBP7 for nuclear import. The nucleoporin-like HRB/RIP is an essential cofactor that probably indirectly interacts with Rev to release HIV RNAs from the perinuclear region to the cytoplasm. The protein is Protein Rev of Human immunodeficiency virus type 1 group M subtype K (isolate 97ZR-EQTB11) (HIV-1).